We begin with the raw amino-acid sequence, 365 residues long: MQYINIVNEGVKQLHPYQAGKPIEELERELGITNIIKLASNENPFGLPDSAKQAILAELDNLTRYPDSNGFYFKQTVAKKFGLSPEQITLGNGSNDLLELVAHTFANEQDEILFSQYAFIVYPLVTQAINAKKVEIPAKNYGADLDGFLQAISDKTKLIYLANPNNPTGTFLSAGEISQFLNQVPAHVIVVLDEAYTEFTLPEERVDSFTLLKKHSNLVICRTLSKAYGLAGLRIGYAVSSAEIADLFNRVRQPFNCNSLALAAATAVLHDDAFIAKVAENNRQGLKLLEDFFTAKGLNYIPSKGNFVMLDVNQPALPIYQALLQKGVIVRPIAGYGLPNHLRISIGLPEENQRFLLALNEVLGL.

Lysine 226 bears the N6-(pyridoxal phosphate)lysine mark.

This sequence belongs to the class-II pyridoxal-phosphate-dependent aminotransferase family. Histidinol-phosphate aminotransferase subfamily. As to quaternary structure, homodimer. It depends on pyridoxal 5'-phosphate as a cofactor.

The catalysed reaction is L-histidinol phosphate + 2-oxoglutarate = 3-(imidazol-4-yl)-2-oxopropyl phosphate + L-glutamate. Its pathway is amino-acid biosynthesis; L-histidine biosynthesis; L-histidine from 5-phospho-alpha-D-ribose 1-diphosphate: step 7/9. This Pasteurella multocida (strain Pm70) protein is Histidinol-phosphate aminotransferase 2 (hisC2).